A 516-amino-acid chain; its full sequence is GMP synthase [glutamine-hydrolyzing] (516 aa).

The Glutamine amidotransferase type-1 domain maps to 6–199; the sequence is KVLILDFGSQ…LFEIAGLTSG (194 aa). Cysteine 83 functions as the Nucleophile in the catalytic mechanism. Catalysis depends on residues histidine 173 and glutamate 175. Residues 200-391 enclose the GMPS ATP-PPase domain; the sequence is WTMSSFLETE…LGMPDFIIWR (192 aa). 227–233 serves as a coordination point for ATP; sequence SGGVDST.

Homodimer.

It carries out the reaction XMP + L-glutamine + ATP + H2O = GMP + L-glutamate + AMP + diphosphate + 2 H(+). It functions in the pathway purine metabolism; GMP biosynthesis; GMP from XMP (L-Gln route): step 1/1. Functionally, catalyzes the synthesis of GMP from XMP. In Solidesulfovibrio magneticus (strain ATCC 700980 / DSM 13731 / RS-1) (Desulfovibrio magneticus), this protein is GMP synthase [glutamine-hydrolyzing].